The primary structure comprises 1204 residues: Exportin-5 (1204 aa).

The tract at residues 1 to 108 (MEMEQVNALC…ANGTLRILEE (108 aa)) is necessary for interaction with Ran. Lys396 is subject to N6-acetyllysine. A necessary for interaction with ILF3 region spans residues 533-640 (ELLQLVLNFE…KQLLSNELLL (108 aa)). The tract at residues 641 to 642 (TQ) is pre-siRNA binding.

This sequence belongs to the exportin family. Component of a nuclear export receptor complex composed of XPO5, RAN, dsRNA-binding proteins and dsRNA. Found in a nuclear export complex with XPO5, RAN, EEF1A1, and aminoacylated tRNA. Found in a nuclear export complex with XPO5, RAN, ILF3 and dsRNA. Found in a nuclear export complex with XPO5, RAN and pre-miRNA. Found in a nuclear export complex with XPO5, RAN, ILF3 and minihelix VA1 dsRNA. Found in a nuclear export complex with XPO5, RAN, ILF3, ZNF346 and dsRNA. Interacts with EEF1A1, ILF3, NUP153, NUP214 and ZNF346. Interacts with RAN and cargo proteins in a GTP-dependent manner. Interacts with ADAR/ADAR1 (via DRBM domains). Interacts with SMAD4; mediates nuclear export of SMAD4. Interacts with RAN (GTP-bound form).

It localises to the nucleus. Its subcellular location is the cytoplasm. Its function is as follows. Mediates the nuclear export of proteins bearing a double-stranded RNA binding domain (dsRBD) and double-stranded RNAs (cargos). XPO5 in the nucleus binds cooperatively to the RNA and to the GTPase Ran in its active GTP-bound form. Proteins containing dsRBDs can associate with this trimeric complex through the RNA. Docking of this complex to the nuclear pore complex (NPC) is mediated through binding to nucleoporins. Upon transit of a nuclear export complex into the cytoplasm, hydrolysis of Ran-GTP to Ran-GDP (induced by RANBP1 and RANGAP1, respectively) cause disassembly of the complex and release of the cargo from the export receptor. XPO5 then returns to the nuclear compartment by diffusion through the nuclear pore complex, to mediate another round of transport. The directionality of nuclear export is thought to be conferred by an asymmetric distribution of the GTP- and GDP-bound forms of Ran between the cytoplasm and nucleus. Overexpression may in some circumstances enhance RNA-mediated gene silencing (RNAi). Mediates nuclear export of ADAR/ADAR1 in a RanGTP-dependent manner. Functionally, mediates the nuclear export of micro-RNA precursors, which form short hairpins. Also mediates the nuclear export of synthetic short hairpin RNAs used for RNA interference. In some circumstances can also mediate the nuclear export of deacylated and aminoacylated tRNAs. Specifically recognizes dsRNAs that lack a 5'-overhang in a sequence-independent manner, have only a short 3'-overhang, and that have a double-stranded length of at least 15 base-pairs. Binding is dependent on Ran-GTP. This is Exportin-5 (Xpo5) from Mus musculus (Mouse).